A 538-amino-acid polypeptide reads, in one-letter code: Fusion glycoprotein F0 (538 aa).

A signal peptide spans 1 to 19; the sequence is MKAFSVTCLGFAVFSSSIC. At 20–482 the chain is on the extracellular side; sequence VNINILQQIG…QLLSVSVNSK (463 aa). N-linked (GlcNAc...) asparagine; by host glycans are attached at residues asparagine 56 and asparagine 73. Positions 103-127 are fusion peptide; that stretch reads FAGIAIGIAALGVATAAQVTAAVSL. A coiled-coil region spans residues 128-156; it reads VQAQTNARAIAAMKNSIQATNRAIFEVKE. An N-linked (GlcNAc...) asparagine; by host glycan is attached at asparagine 182. 4 disulfide bridges follow: cysteine 324–cysteine 333, cysteine 348–cysteine 356, cysteine 380–cysteine 385, and cysteine 387–cysteine 410. N-linked (GlcNAc...) asparagine; by host glycosylation is present at asparagine 352. 3 N-linked (GlcNAc...) asparagine; by host glycosylation sites follow: asparagine 427, asparagine 433, and asparagine 457. Residues 452 to 477 adopt a coiled-coil conformation; it reads ELSKVNASLQNAVKYIKESNHQLLSV. A helical membrane pass occupies residues 483-503; the sequence is IGAIIVTALVLSILSIIISLL. Topologically, residues 504-538 are cytoplasmic; sequence FCCWAYIATKEIRRINFKTNHINTISSSVDDLIRY.

The protein belongs to the paramyxoviruses fusion glycoprotein family. In terms of assembly, homotrimer; disulfide-linked F1-F2. Interacts with host LAMP1; LAMP2 and LAMP3; these interactions promote the cleavage of the viral fusion protein F. In terms of processing, the inactive precursor F0 is glycosylated and proteolytically cleaved into F1 and F2 to be functionally active. The cleavage is mediated by cellular proteases including host FURIN during the transport and maturation of the polypeptide.

The protein resides in the virion membrane. Its subcellular location is the host cell membrane. In terms of biological role, class I viral fusion protein. Under the current model, the protein has at least 3 conformational states: pre-fusion native state, pre-hairpin intermediate state, and post-fusion hairpin state. During viral and plasma cell membrane fusion, the heptad repeat (HR) regions assume a trimer-of-hairpins structure, positioning the fusion peptide in close proximity to the C-terminal region of the ectodomain. The formation of this structure appears to drive apposition and subsequent fusion of viral and plasma cell membranes. Directs fusion of viral and cellular membranes leading to delivery of the nucleocapsid into the cytoplasm. This fusion is pH independent and occurs directly at the outer cell membrane. The trimer of F1-F2 (F protein) probably interacts with HN at the virion surface. Upon HN binding to its cellular receptor, the hydrophobic fusion peptide is unmasked and interacts with the cellular membrane, inducing the fusion between cell and virion membranes. Later in infection, F proteins expressed at the plasma membrane of infected cells could mediate fusion with adjacent cells to form syncytia, a cytopathic effect that could lead to tissue necrosis. In Homo sapiens (Human), this protein is Fusion glycoprotein F0 (F).